The chain runs to 277 residues: MSSSRPVALVTGANKGIGFAITRDLCRKFSGDVVLAARDEERGQTAVQKLQAEGLSPRFHQLDIDNPQSIRALRDFLLKEYGGLDVLVNNAGIAFKVNDDTPFHIQAEVTMKTNFFGTRDVCKELLPLIKPQGRVVNVSSMVSLRALKNCRLELQQKFRSETITEEELVGLMNKFVEDTKKGVHAEEGWPNSAYGVTKIGVTVLSRILARKLNEQRRGDKILLNACCPGWVRTDMAGPKATKSPEEGAETPVYLALLPPDAEGPHGQFVQDKKVEPW.

Residue Ser2 is modified to N-acetylserine. Ser2 and Ser30 each carry phosphoserine. NADP(+) contacts are provided by residues 10-34 (VTGA…GDVV), 63-64 (DI), and Asn90. Residues 95-97 (FKV) and Gln106 each bind glutathione. Ser140 lines the substrate pocket. 193–194 (AY) lines the glutathione pocket. The active-site Proton acceptor is Tyr194. NADP(+)-binding positions include 194 to 198 (YGVTK) and 231 to 233 (VRT). Residue Lys239 is modified to N6-1-carboxyethyl lysine. Residues 258-277 (PPDAEGPHGQFVQDKKVEPW) form a disordered region.

This sequence belongs to the short-chain dehydrogenases/reductases (SDR) family. Monomer.

The protein resides in the cytoplasm. It catalyses the reaction a secondary alcohol + NADP(+) = a ketone + NADPH + H(+). The catalysed reaction is prostaglandin F2alpha + NADP(+) = prostaglandin E2 + NADPH + H(+). The enzyme catalyses prostaglandin E1 + NADP(+) = 15-oxoprostaglandin E1 + NADPH + H(+). It carries out the reaction menadione + NADPH + H(+) = menadiol + NADP(+). It catalyses the reaction prostaglandin D2 + NADP(+) = 15-oxoprostaglandin D2 + NADPH + H(+). The catalysed reaction is prostaglandin E2 + NADP(+) = 15-oxoprostaglandin E2 + NADPH + H(+). The enzyme catalyses prostaglandin F2alpha + NADP(+) = 15-oxoprostaglandin F2alpha + NADPH + H(+). It carries out the reaction daunorubicin + NADPH + H(+) = 13-dihydrodaunorubicin + NADP(+). It catalyses the reaction S-nitrosoglutathione + NADPH + H(+) = S-(hydroxysulfenamide)glutathione + NADP(+). The catalysed reaction is corticosterone + NADPH + H(+) = 20beta-dihydrocorticosterone + NADP(+). The enzyme catalyses a primary alcohol + NADP(+) = an aldehyde + NADPH + H(+). It carries out the reaction cortisol + NADPH + H(+) = 20beta-dihydrocortisol + NADP(+). Functionally, NADPH-dependent reductase with broad substrate specificity. Catalyzes the reduction of a wide variety of carbonyl compounds including quinones, prostaglandins, menadione, plus various xenobiotics. Catalyzes the reduction of the antitumor anthracyclines doxorubicin and daunorubicin to the cardiotoxic compounds doxorubicinol and daunorubicinol. Can convert prostaglandin E to prostaglandin F2-alpha. Can bind glutathione, which explains its higher affinity for glutathione-conjugated substrates. Catalyzes the reduction of S-nitrosoglutathione. In addition, participates in the glucocorticoid metabolism by catalyzing the NADPH-dependent cortisol/corticosterone into 20beta-dihydrocortisol (20b-DHF) or 20beta-corticosterone (20b-DHB), which are weak agonists of NR3C1 and NR3C2 in adipose tissue. This Mus musculus (Mouse) protein is Carbonyl reductase [NADPH] 1.